A 371-amino-acid polypeptide reads, in one-letter code: Aspartate-semialdehyde dehydrogenase (371 aa).

NADP(+) contacts are provided by residues R11–V14, T38–S39, and Q75. R104 serves as a coordination point for phosphate. The Acyl-thioester intermediate role is filled by C137. A substrate-binding site is contributed by Q164. S167–G168 is an NADP(+) binding site. E243 provides a ligand contact to substrate. K246 contacts phosphate. R269 provides a ligand contact to substrate. H276 acts as the Proton acceptor in catalysis. Q352 serves as a coordination point for NADP(+).

This sequence belongs to the aspartate-semialdehyde dehydrogenase family. Homodimer.

It catalyses the reaction L-aspartate 4-semialdehyde + phosphate + NADP(+) = 4-phospho-L-aspartate + NADPH + H(+). It functions in the pathway amino-acid biosynthesis; L-lysine biosynthesis via DAP pathway; (S)-tetrahydrodipicolinate from L-aspartate: step 2/4. It participates in amino-acid biosynthesis; L-methionine biosynthesis via de novo pathway; L-homoserine from L-aspartate: step 2/3. The protein operates within amino-acid biosynthesis; L-threonine biosynthesis; L-threonine from L-aspartate: step 2/5. Its function is as follows. Catalyzes the NADPH-dependent formation of L-aspartate-semialdehyde (L-ASA) by the reductive dephosphorylation of L-aspartyl-4-phosphate. This is Aspartate-semialdehyde dehydrogenase from Buchnera aphidicola subsp. Acyrthosiphon pisum (strain APS) (Acyrthosiphon pisum symbiotic bacterium).